We begin with the raw amino-acid sequence, 113 residues long: Phosphoribosyl-ATP pyrophosphatase (113 aa).

It belongs to the PRA-PH family.

The protein localises to the cytoplasm. It carries out the reaction 1-(5-phospho-beta-D-ribosyl)-ATP + H2O = 1-(5-phospho-beta-D-ribosyl)-5'-AMP + diphosphate + H(+). Its pathway is amino-acid biosynthesis; L-histidine biosynthesis; L-histidine from 5-phospho-alpha-D-ribose 1-diphosphate: step 2/9. The sequence is that of Phosphoribosyl-ATP pyrophosphatase from Janthinobacterium sp. (strain Marseille) (Minibacterium massiliensis).